Here is a 59-residue protein sequence, read N- to C-terminus: uncharacterized protein (59 aa).

Composition is skewed to basic and acidic residues over residues 1–23 and 36–45; these read MAEH…DAGR and DPQRASEAGK. The segment at 1 to 59 is disordered; the sequence is MAEHRGGSGNFAEDREKASDAGRKGGQHSGGNFKNDPQRASEAGKKGGQQSGGNKSGKS. Over residues 46-59 the composition is skewed to gly residues; the sequence is KGGQQSGGNKSGKS.

The protein belongs to the con-10 family.

This is an uncharacterized protein from Escherichia coli (strain K12).